Consider the following 622-residue polypeptide: MALLQISEPGMAPAPHQRRLAVGIDLGTTNSLVAAVRNSVPEVLPDEAGRVLLPSVVRYLEKGGRRIGHEAKEQAATDPRNTIVSVKRFMGRGKAEVEGAANAPYEFVDAPGMVQIRTIDGVKSPVEVSAEILATLRYRAEDTLGDELVGAVITVPAYFDDAQRQATKDAARLAGLNVLRLLNEPTAAAIAYGLDNAAEGLYAVYDLGGGTFDLSILKLTKGVFEVLAAGGDSALGGDDFDHALFDHVLAQAGIDAKTLAPEDVRLLLDRVRVLKEALSSAPEAALDVTLSSGAHLAPTISHDTFASLVEPLVQRTLTPTRKALRDAQVTPADIKGVVLVGGATRMPVIRDAVAKYFGQPPLVNLDPDQVVALGAAIQADLLAGNRGTGDDWLLLDVIPLSLGVETMGGLVEKIIPRNSTIPIARAQEFTTFKDGQTAMAIHVVQGERELVADCRSLARFELRGIPPMTAGAARIRVTYQVDADGLLSVFAREQQSGVEASVVVKPSYGLADDDIAKMLEDSFKTAEIDMRARALREAQVEAQRMLEATQAALAADGELLDADERAQVDALADALRAVAQGDDTNAIEAATKALADGTDEFAARRMDKSIKRALSGRRLDEI.

Belongs to the heat shock protein 70 family.

Chaperone involved in the maturation of iron-sulfur cluster-containing proteins. Has a low intrinsic ATPase activity which is markedly stimulated by HscB. The protein is Chaperone protein HscA homolog of Burkholderia cenocepacia (strain ATCC BAA-245 / DSM 16553 / LMG 16656 / NCTC 13227 / J2315 / CF5610) (Burkholderia cepacia (strain J2315)).